Here is a 200-residue protein sequence, read N- to C-terminus: Segregation and condensation protein B (200 aa).

Belongs to the ScpB family. Homodimer. Homodimerization may be required to stabilize the binding of ScpA to the Smc head domains. Component of a cohesin-like complex composed of ScpA, ScpB and the Smc homodimer, in which ScpA and ScpB bind to the head domain of Smc. The presence of the three proteins is required for the association of the complex with DNA.

It localises to the cytoplasm. Participates in chromosomal partition during cell division. May act via the formation of a condensin-like complex containing Smc and ScpA that pull DNA away from mid-cell into both cell halves. The chain is Segregation and condensation protein B from Lactobacillus delbrueckii subsp. bulgaricus (strain ATCC 11842 / DSM 20081 / BCRC 10696 / JCM 1002 / NBRC 13953 / NCIMB 11778 / NCTC 12712 / WDCM 00102 / Lb 14).